An 872-amino-acid polypeptide reads, in one-letter code: Alanine--tRNA ligase (872 aa).

The Zn(2+) site is built by His567, His571, Cys669, and His673.

The protein belongs to the class-II aminoacyl-tRNA synthetase family. It depends on Zn(2+) as a cofactor.

The protein localises to the cytoplasm. It carries out the reaction tRNA(Ala) + L-alanine + ATP = L-alanyl-tRNA(Ala) + AMP + diphosphate. Catalyzes the attachment of alanine to tRNA(Ala) in a two-step reaction: alanine is first activated by ATP to form Ala-AMP and then transferred to the acceptor end of tRNA(Ala). Also edits incorrectly charged Ser-tRNA(Ala) and Gly-tRNA(Ala) via its editing domain. The protein is Alanine--tRNA ligase of Streptococcus pyogenes serotype M6 (strain ATCC BAA-946 / MGAS10394).